Reading from the N-terminus, the 229-residue chain is Peroxiredoxin 1 (229 aa).

In terms of domain architecture, Thioredoxin spans 33–192 (LGPKNKAPDF…AFRTLKAFQF (160 aa)). The active-site Cysteine sulfenic acid (-SOH) intermediate is Cys78.

The protein belongs to the peroxiredoxin family. AhpC/Prx1 subfamily. As to quaternary structure, homodimer; disulfide-linked, upon oxidation.

The catalysed reaction is a hydroperoxide + [thioredoxin]-dithiol = an alcohol + [thioredoxin]-disulfide + H2O. In terms of biological role, thiol-specific peroxidase that catalyzes the reduction of hydrogen peroxide and organic hydroperoxides to water and alcohols, respectively. Plays a role in cell protection against oxidative stress by detoxifying peroxides and as sensor of hydrogen peroxide-mediated signaling events. This chain is Peroxiredoxin 1 (TSA1), found in Brugia malayi (Filarial nematode worm).